We begin with the raw amino-acid sequence, 211 residues long: uncharacterized protein (211 aa).

2 disordered regions span residues 45-74 (RSCG…GALS) and 147-211 (AETR…WEEP). Positions 48-71 (GRSSTGGCSPCSGPGPSSPRTSRG) are enriched in low complexity. Over residues 195 to 205 (DSGSIKMSENE) the composition is skewed to polar residues.

This is an uncharacterized protein from Homo sapiens (Human).